The sequence spans 62 residues: Calmodulin regulator protein PCP4 (62 aa).

Positions 1–39 (MSERQSAGATNGKDKTSGDNDGQKKVQEEFDIDMDAPET) are disordered. Residues 12–28 (GKDKTSGDNDGQKKVQE) show a composition bias toward basic and acidic residues. The segment at 28–40 (EEFDIDMDAPETE) is acidic; binds calcium and is required for modulating the calcium-binding kinetics of calmodulin. In terms of domain architecture, IQ spans 39–62 (TERAAVAIQSQFRKFQKKKAGSQS).

This sequence belongs to the PCP4 family. As to quaternary structure, binds to both calcium-free and calcium-bound calmodulin. The affinity for the calcium-bound form is 50-fold greater.

Functions as a modulator of calcium-binding by calmodulin. Thereby, regulates calmodulin activity and the different processes it controls. For instance, may play a role in neuronal differentiation through activation of calmodulin-dependent kinase signaling pathways. This is Calmodulin regulator protein PCP4 from Mus musculus (Mouse).